A 923-amino-acid polypeptide reads, in one-letter code: Isoleucine--tRNA ligase (923 aa).

The 'HIGH' region motif lies at 57-67; it reads PYANGDIHMGH. An L-isoleucyl-5'-AMP-binding site is contributed by glutamate 553. The short motif at 594–598 is the 'KMSKS' region element; sequence KMSKS. Lysine 597 provides a ligand contact to ATP. The Zn(2+) site is built by cysteine 888, cysteine 891, cysteine 908, and cysteine 911.

This sequence belongs to the class-I aminoacyl-tRNA synthetase family. IleS type 1 subfamily. In terms of assembly, monomer. Requires Zn(2+) as cofactor.

Its subcellular location is the cytoplasm. It carries out the reaction tRNA(Ile) + L-isoleucine + ATP = L-isoleucyl-tRNA(Ile) + AMP + diphosphate. Catalyzes the attachment of isoleucine to tRNA(Ile). As IleRS can inadvertently accommodate and process structurally similar amino acids such as valine, to avoid such errors it has two additional distinct tRNA(Ile)-dependent editing activities. One activity is designated as 'pretransfer' editing and involves the hydrolysis of activated Val-AMP. The other activity is designated 'posttransfer' editing and involves deacylation of mischarged Val-tRNA(Ile). The protein is Isoleucine--tRNA ligase of Shouchella clausii (strain KSM-K16) (Alkalihalobacillus clausii).